A 255-amino-acid chain; its full sequence is Proliferating cell nuclear antigen 2 (255 aa).

A DNA-binding region spans residues 61-80 (HCDRNVSLGLDLKSLGKVLK).

This sequence belongs to the PCNA family. Homotrimer. Interacts with the catalytic subunits of two DNA polymerase complexes: PolD1 in the delta complex and PolE1/DNApol-epsilon255 in the epsilon complex.

It is found in the nucleus. It localises to the chromosome. The protein resides in the cytoplasm. Likely to be an auxiliary protein of DNA polymerase delta complex and is probably involved in the control of DNA replication and repair by increasing the polymerase's processibility. May function independently of PCNA during DNA repair. The protein is Proliferating cell nuclear antigen 2 of Drosophila melanogaster (Fruit fly).